Consider the following 210-residue polypeptide: Probable transcriptional regulator ycf29 (210 aa).

The region spanning Asn3 to Leu119 is the Response regulatory domain. Asp52 carries the post-translational modification 4-aspartylphosphate. Residues Ser142–Asn207 form the HTH luxR-type domain.

It is found in the plastid. Its subcellular location is the cyanelle. The protein is Probable transcriptional regulator ycf29 (ycf29) of Cyanophora paradoxa.